A 613-amino-acid polypeptide reads, in one-letter code: tRNA 5-methylaminomethyl-2-thiouridine biosynthesis bifunctional protein MnmC (613 aa).

Positions 1–225 (MKKAKLIFKD…KREMIKAYLE (225 aa)) are tRNA (mnm(5)s(2)U34)-methyltransferase. The segment at 252-613 (IGAGISSAVL…FLIRKLKKGL (362 aa)) is FAD-dependent cmnm(5)s(2)U34 oxidoreductase.

The protein in the N-terminal section; belongs to the methyltransferase superfamily. tRNA (mnm(5)s(2)U34)-methyltransferase family. It in the C-terminal section; belongs to the DAO family. It depends on FAD as a cofactor.

The protein localises to the cytoplasm. It carries out the reaction 5-aminomethyl-2-thiouridine(34) in tRNA + S-adenosyl-L-methionine = 5-methylaminomethyl-2-thiouridine(34) in tRNA + S-adenosyl-L-homocysteine + H(+). Catalyzes the last two steps in the biosynthesis of 5-methylaminomethyl-2-thiouridine (mnm(5)s(2)U) at the wobble position (U34) in tRNA. Catalyzes the FAD-dependent demodification of cmnm(5)s(2)U34 to nm(5)s(2)U34, followed by the transfer of a methyl group from S-adenosyl-L-methionine to nm(5)s(2)U34, to form mnm(5)s(2)U34. The polypeptide is tRNA 5-methylaminomethyl-2-thiouridine biosynthesis bifunctional protein MnmC (Campylobacter jejuni (strain RM1221)).